Reading from the N-terminus, the 194-residue chain is MTAGLFWIAGAYLLGSIPTGLLLGKLYGIDVRNEGSGNIGATNLYRTVGRKVGILTLTGDCLKGLLPVLLAWKLGHAEPMQAWVGLAAFCGHVFSVFLLFKGGKGVATALGVFLALAPLAVLGALAVFILLVAVWRYISLGSIMAAAVMPLIIFFRPHSPQLLIATVLIAAVVIIKHHSNISRLIAGTESKFKA.

Transmembrane regions (helical) follow at residues 3–23, 52–72, 80–100, 112–132, 135–155, and 162–182; these read AGLF…GLLL, VGIL…LLAW, MQAW…FLLF, VFLA…ILLV, WRYI…IIFF, and LLIA…SNIS.

The protein belongs to the PlsY family. As to quaternary structure, probably interacts with PlsX.

Its subcellular location is the cell inner membrane. The enzyme catalyses an acyl phosphate + sn-glycerol 3-phosphate = a 1-acyl-sn-glycero-3-phosphate + phosphate. It functions in the pathway lipid metabolism; phospholipid metabolism. Catalyzes the transfer of an acyl group from acyl-phosphate (acyl-PO(4)) to glycerol-3-phosphate (G3P) to form lysophosphatidic acid (LPA). This enzyme utilizes acyl-phosphate as fatty acyl donor, but not acyl-CoA or acyl-ACP. This chain is Glycerol-3-phosphate acyltransferase, found in Trichlorobacter lovleyi (strain ATCC BAA-1151 / DSM 17278 / SZ) (Geobacter lovleyi).